A 237-amino-acid chain; its full sequence is Placenta-expressed transcript 1 protein (237 aa).

The signal sequence occupies residues 1–27 (MLSLRSLLPHLGLFLCLALHLSPSLSA). 4 N-linked (GlcNAc...) asparagine glycosylation sites follow: Asn-30, Asn-67, Asn-103, and Asn-136. The span at 145–162 (KMEQVQPSASTPIPESSE) shows a compositional bias: polar residues. Positions 145-170 (KMEQVQPSASTPIPESSETSQTINTT) are disordered. Residue Ser-218 is the site of GPI-anchor amidated serine attachment. Residues 219 to 237 (PLAGALHILLVFLISKLLF) constitute a propeptide, removed in mature form.

Post-translationally, N-glycosylated. GPI-anchored. As to expression, present in hair follicle cells and sebaceous gland of skin, ciliated epithelial cells of trachea and bronchial tube, striated portion of submandibular gland, distal convoluted tubule cells of kidney, ciliated epithelial cells of oviduct, medulla of adrenal gland and anterior lobe of pituitary gland. Expressed in keratinocytes of the hair follicle at the trichilemmal zone corresponding to the terminally differentiated outermost suprabasal outer root sheath (ORS), including that of the sebaceous gland duct (SGD) and the directly adjacent upper distal end of the companion layer (CL). Expression is similar in all hair follicle growth stages. Also detected during both the early and late anagen phases above the bulge of stem cells. Expressed at the leading edge of the epidermal wound. Not expressed in the interfollicular epidermis (IFE), inner root sheath (IRS) and hair fiber. Highly expressed in placenta. Detected in mammary and prostate epithelia and in the pancreas (at protein level).

The protein resides in the apical cell membrane. Modulates leading keratinocyte migration and cellular adhesion to matrix proteins during a wound-healing response and promotes wound repair. May play a role during trichilemmal differentiation of the hair follicle. The polypeptide is Placenta-expressed transcript 1 protein (Plet1) (Mus musculus (Mouse)).